The sequence spans 284 residues: uncharacterized protein (284 aa).

A helical transmembrane segment spans residues 9–28; the sequence is IILRWVVTLYIYGFILYQIT.

The protein resides in the membrane. This is an uncharacterized protein from Aquifex aeolicus (strain VF5).